The primary structure comprises 607 residues: Hemagglutinin glycoprotein (607 aa).

Topologically, residues 1–37 are intravirion; it reads MLSYQDKAGAFYKDNARANSTKLSLVTEEHGGRRPPY. Residues 38-58 traverse the membrane as a helical segment; sequence LLFVLLVLLVGILALLAITGV. The Virion surface portion of the chain corresponds to 59–607; that stretch reads RFHQVSTSNM…IRFSCNRSNP (549 aa). N149, N391, N422, N456, N587, and N603 each carry an N-linked (GlcNAc...) asparagine; by host glycan.

This sequence belongs to the paramyxoviruses hemagglutinin-neuraminidase family. Non-sialidase subfamily. As to quaternary structure, binds canine SLAMF1 at the cell surface.

The protein localises to the virion membrane. The protein resides in the host cell membrane. Attaches the virus to cell receptors and thereby initiating infection. Binding of H protein to the receptor induces a conformational change that allows the F protein to trigger virion/cell membranes fusion. The cellular receptor might be SLAM, and may explain the lymphotropism of the virus. The polypeptide is Hemagglutinin glycoprotein (H) (Ailuropoda melanoleuca (Giant panda)).